A 263-amino-acid polypeptide reads, in one-letter code: Chymotrypsinogen B (263 aa).

The signal sequence occupies residues 1-18; sequence MAFLWLVSCFALVGATFG. Cystine bridges form between C19–C140, C60–C76, C154–C219, C186–C200, and C209–C238. Residues 34-261 enclose the Peptidase S1 domain; that stretch reads IVNGEDAIPG…LMPWVQEILE (228 aa). H75 functions as the Charge relay system in the catalytic mechanism. Position 93 is a phosphoserine (S93). D120 acts as the Charge relay system in catalysis. S213 (charge relay system) is an active-site residue.

It belongs to the peptidase S1 family.

It localises to the secreted. The protein localises to the extracellular space. It carries out the reaction Preferential cleavage: Tyr-|-Xaa, Trp-|-Xaa, Phe-|-Xaa, Leu-|-Xaa.. This chain is Chymotrypsinogen B (Ctrb1), found in Mus musculus (Mouse).